Consider the following 200-residue polypeptide: Phospholipase A2 inhibitor CNF (200 aa).

Positions 1 to 19 (MKYLHTICLLFIFVARGNS) are cleaved as a signal peptide. 8 disulfides stabilise this stretch: Cys-22/Cys-46, Cys-25/Cys-32, Cys-39/Cys-67, Cys-73/Cys-94, Cys-95/Cys-100, Cys-118/Cys-143, Cys-136/Cys-165, and Cys-169/Cys-191. N-linked (GlcNAc...) asparagine; partial glycosylation is present at Asn-176.

In terms of assembly, occurs as a mixture of oligomers. Tetrameric arrangement appears to be the predominant quaternary structure. Interacts with phospholipase A2 crotoxin basic subunit CBd; the interaction leads to dissociation of the CA-CB heterodimer and to inhibition of PLA2 activity of the CB subunit. Post-translationally, the carbohydrate moiety increases the inhibition capacity of CNF, but is not essential for activity and for oligomerization. In terms of tissue distribution, expressed by the liver.

The protein resides in the secreted. In terms of biological role, inhibits the PLA2 activity of crotoxin (CTX) by replacing the acid subunit (CA) in the CTX complex. Displays a pro-inflammatory action through activation of important main signaling pathways for human leukocytes, in vitro. Abolishes both the muscle-paralyzing and muscle-damaging activities of CTX in mice phrenic nerve-diaphragm muscle preparations. This is Phospholipase A2 inhibitor CNF from Crotalus durissus terrificus (South American rattlesnake).